The following is a 185-amino-acid chain: Lysine-rich arabinogalactan protein 17 (185 aa).

Residues 1–21 (MTRNILLTVTLICIVFITVGG) form the signal peptide. A disordered region spans residues 25–160 (ATAPIHSPST…FSPAADDQSG (136 aa)). Residues 43–68 (SPAISPAAPTPESTEAPAKTPVEAPV) show a composition bias toward low complexity. Positions 69–88 (EAPPSPTPASTPQISPPAPS) are enriched in pro residues. Positions 111–122 (TKHKKKTKKHKT) are enriched in basic residues. Over residues 135 to 146 (PPAPPGEAPGPG) the composition is skewed to pro residues. Serine 159 carries the GPI-anchor amidated serine lipid modification. The propeptide at 160 to 185 (GAQRISVVIQMVGAAAIAWSLLVLAF) is removed in mature form.

Belongs to the lysine-rich AGP family. Post-translationally, O-glycosylated on the hydroxyproline residues. In terms of tissue distribution, predominantly expressed in open flowers. Also expressed in leaves and stems, and at a lower level in roots.

The protein localises to the cell membrane. In terms of biological role, proteoglycan that seems to be implicated in diverse developmental roles such as differentiation, cell-cell recognition, embryogenesis and programmed cell death. The polypeptide is Lysine-rich arabinogalactan protein 17 (AGP17) (Arabidopsis thaliana (Mouse-ear cress)).